The sequence spans 780 residues: ATP-dependent 6-phosphofructokinase, liver type (780 aa).

N-acetylalanine is present on Ala-2. An N-terminal catalytic PFK domain 1 region spans residues 2–390; it reads ATVDLEKLRM…NWKIYKLLAH (389 aa). ATP is bound by residues Gly-25, 88–89, and 118–121; these read RC and GDGS. Asp-119 lines the Mg(2+) pocket. Substrate contacts are provided by residues 164 to 166, Arg-201, 208 to 210, Glu-264, Arg-292, and 298 to 301; these read SID, MGR, and HVQR. The active-site Proton acceptor is the Asp-166. Residue Ser-377 is modified to Phosphoserine. The segment at 391–400 is interdomain linker; sequence QKVSKEKSNF. Positions 401–780 are C-terminal regulatory PFK domain 2; that stretch reads SLAILNVGAP…RRTLSIDKGF (380 aa). Beta-D-fructose 2,6-bisphosphate is bound by residues Arg-470, 527–531, Arg-565, 572–574, and Glu-628; these read TISNN and MGG. Residue Ser-529 is glycosylated (O-linked (GlcNAc) serine). Tyr-640 carries the phosphotyrosine modification. Beta-D-fructose 2,6-bisphosphate contacts are provided by residues Arg-654, 660–663, and Arg-734; that span reads HLQQ. A Phosphoserine modification is found at Ser-775.

This sequence belongs to the phosphofructokinase type A (PFKA) family. ATP-dependent PFK group I subfamily. Eukaryotic two domain clade 'E' sub-subfamily. In terms of assembly, homo- and heterotetramers. Phosphofructokinase (PFK) enzyme functions as a tetramer composed of different combinations of 3 types of subunits, called PFKM (M), PFKL (L) and PFKP (P). The composition of the PFK tetramer differs according to the tissue type it is present in. The kinetic and regulatory properties of the tetrameric enzyme are dependent on the subunit composition, hence can vary across tissues. Requires Mg(2+) as cofactor. In terms of processing, glcNAcylation at Ser-529 by OGT decreases enzyme activity, leading to redirect glucose flux through the oxidative pentose phosphate pathway. Glycosylation is stimulated by both hypoxia and glucose deprivation.

The protein resides in the cytoplasm. The catalysed reaction is beta-D-fructose 6-phosphate + ATP = beta-D-fructose 1,6-bisphosphate + ADP + H(+). The protein operates within carbohydrate degradation; glycolysis; D-glyceraldehyde 3-phosphate and glycerone phosphate from D-glucose: step 3/4. Its activity is regulated as follows. Allosterically activated by ADP, AMP, or fructose 2,6-bisphosphate, and allosterically inhibited by ATP or citrate. GlcNAcylation by OGT overcomes allosteric regulation. In terms of biological role, catalyzes the phosphorylation of D-fructose 6-phosphate to fructose 1,6-bisphosphate by ATP, the first committing step of glycolysis. Negatively regulates the phagocyte oxidative burst in response to bacterial infection by controlling cellular NADPH biosynthesis and NADPH oxidase-derived reactive oxygen species. Upon macrophage activation, drives the metabolic switch toward glycolysis, thus preventing glucose turnover that produces NADPH via pentose phosphate pathway. This Mus musculus (Mouse) protein is ATP-dependent 6-phosphofructokinase, liver type.